Reading from the N-terminus, the 112-residue chain is Nitrogen regulatory protein GlnK2 (112 aa).

ADP contacts are provided by residues T29, 37–39 (GVQ), V64, and 87–90 (GDGK). ATP contacts are provided by residues T29, 37–39 (GVQ), V64, and 87–90 (GDGK).

The protein belongs to the P(II) protein family. In terms of assembly, homotrimer. Interacts and forms a complex with Amt2.

It is found in the cytoplasm. Involved in the regulation of nitrogen metabolism. Regulates the activity of its targets by protein-protein interaction in response to the nitrogen status of the cell. Regulates the activity of the ammonia channel Amt2 via direct interaction. The protein is Nitrogen regulatory protein GlnK2 of Methanocaldococcus jannaschii (strain ATCC 43067 / DSM 2661 / JAL-1 / JCM 10045 / NBRC 100440) (Methanococcus jannaschii).